A 493-amino-acid polypeptide reads, in one-letter code: UDP-N-acetylmuramate--L-alanine ligase (493 aa).

126–132 lines the ATP pocket; the sequence is GTHGKTT.

The protein belongs to the MurCDEF family.

Its subcellular location is the cytoplasm. The catalysed reaction is UDP-N-acetyl-alpha-D-muramate + L-alanine + ATP = UDP-N-acetyl-alpha-D-muramoyl-L-alanine + ADP + phosphate + H(+). The protein operates within cell wall biogenesis; peptidoglycan biosynthesis. Functionally, cell wall formation. This chain is UDP-N-acetylmuramate--L-alanine ligase, found in Hamiltonella defensa subsp. Acyrthosiphon pisum (strain 5AT).